The primary structure comprises 389 residues: MTELKKTALHLVHEKLGARFTDFGGWDMPLKYSSELDEHHAVRNAVGVFDLSHMGEVRVTGPQAAEFLDHALISKLSAVKVGKAKYSMICTESGGIIDDLITYRLGDNEFLIVPNAGNVDNVVSALQGRTEGFDVEVNNESDATSMIAVQGPKAAQAMLEIVENVVDAPEASGAGETVAEAIEGLGYYAAFSGVAAGQPVLVARTGYTGEDGFELIVANDGAETVWTKAMDQAAQLGGLPCGLACRDTLRLEAGMPLYGNELSLKLTPVDAGLGILAATKSKDSFVGRDAIVSAKEKGTQQVLIGLAGEGRRAARGGYEVFAGDGEKAIGAVTSGALSPTLGHPVALAYVAKSAVSSGAAAEGATVEVDIRGKRFEYKVVALPFYSREK.

It belongs to the GcvT family. In terms of assembly, the glycine cleavage system is composed of four proteins: P, T, L and H.

The enzyme catalyses N(6)-[(R)-S(8)-aminomethyldihydrolipoyl]-L-lysyl-[protein] + (6S)-5,6,7,8-tetrahydrofolate = N(6)-[(R)-dihydrolipoyl]-L-lysyl-[protein] + (6R)-5,10-methylene-5,6,7,8-tetrahydrofolate + NH4(+). In terms of biological role, the glycine cleavage system catalyzes the degradation of glycine. The protein is Aminomethyltransferase of Corynebacterium jeikeium (strain K411).